Consider the following 105-residue polypeptide: Large ribosomal subunit protein uL24 (105 aa).

This sequence belongs to the universal ribosomal protein uL24 family. Part of the 50S ribosomal subunit.

Its function is as follows. One of two assembly initiator proteins, it binds directly to the 5'-end of the 23S rRNA, where it nucleates assembly of the 50S subunit. Functionally, one of the proteins that surrounds the polypeptide exit tunnel on the outside of the subunit. The polypeptide is Large ribosomal subunit protein uL24 (Nitrosococcus oceani (strain ATCC 19707 / BCRC 17464 / JCM 30415 / NCIMB 11848 / C-107)).